An 864-amino-acid chain; its full sequence is MPSTALSPPSRPPAQSYDSYSSSLSPSSPRFHAAAGSHGRRSPSPSRLESLLDGPHVPPRSPSRKIRSALSRHIRPHITPRTLTPVFLWTLALWLIHHFLFPLSSPFAKLAKPKAEEHFLSTTFPPPAQRLGDDRLDSVDPRWRAYHPLPAPEPPFPRLRPTRFLPPQCLEQWFAEGETLCGAKEMGEEETLDATWLWVNGSDHRWRDSMVEWREKENVNSPERHYREQNELVHSMRSVLDALPGHLRTFHLILADYPFNYPEDLELVPSSIIPDLEVAASKSKGRRHPRELPGAPASLANLTERVTPESISPTLASHLQSEWRILQTPTWLDFSRRDPSDPSHPFHPYSVSKAGEIRQHYAEASYPTLRYASHWEVFHIPSVDRDGRQELMGEREWRENEWKKKALPSFNSMAIESRIGWLPGLADAIIALNDDFFLLRPHAVSDFHSPLYGSVIRFEHGYNQQVKPDVEKNHINDPGEMGGLYHANALLSRRFPRRLRPYFAHVPKVITRGLHHEASLMFQEALTESSTRRFREMKIGEGDVQMQWLLTSLRVERWREALLWTWTVANMGTLGGSQDHWDNDTRRAIKNLFGFTENDDDVVKIEVHRGERWTLEPGRMQRVFRQAGWEAPKATEFLFSSMDGIMPPLLRSGEDPAQNDRCIIDLNRCFGLFWTREEDVLSSDMMKRLTFQYPECGDCMIMALVTASGTLGLNAFFPPKETTITAPELGPGDAYPKFLPPPHLPLTPTWHEADFSLANILSTTALPGEQVDIRQYCMRLLSRYLYLDAKSVSHFHMMKSAEHARRVFRMIQGDPKVSILGMNDDIESDYDEVRGLMNEWFEMRWPRKAVWERDWDPVKDRYND.

A disordered region spans residues 1-66 (MPSTALSPPS…VPPRSPSRKI (66 aa)). Residues 1 to 82 (MPSTALSPPS…HIRPHITPRT (82 aa)) lie on the Cytoplasmic side of the membrane. Low complexity-rich tracts occupy residues 16-29 (SYDSYSSSLSPSSP) and 42-52 (SPSPSRLESLL). Residues 83–103 (LTPVFLWTLALWLIHHFLFPL) traverse the membrane as a helical segment. Residues 104–864 (SSPFAKLAKP…WDPVKDRYND (761 aa)) are Lumenal-facing. N-linked (GlcNAc...) asparagine glycans are attached at residues Asn200, Asn301, and Asn583.

This sequence belongs to the XPT1 family. Mn(2+) serves as cofactor.

Its subcellular location is the golgi apparatus membrane. It catalyses the reaction 3-alpha-D-mannopyranosyl-alpha-D-mannopyranose + UDP-alpha-D-xylose = 3-O-(6-O-alpha-D-xylosylphospho-alpha-D-mannopyranosyl)-alpha-D-mannopyranose + UMP + H(+). Xylosylphosphotransferase that is specific for UDP-xylose as a donor and mannose as an acceptor to form a xylose-alpha-1-phosphate-6-mannose linkage. Functions in the O-glycosylation of proteins en route through the secretory pathway. The chain is 3-O-alpha-D-mannopyranosyl-alpha-D-mannopyranose xylosylphosphotransferase (XPT1) from Cryptococcus neoformans var. grubii (Filobasidiella neoformans var. grubii).